The chain runs to 371 residues: Protein OSB2, chloroplastic (371 aa).

A chloroplast-targeting transit peptide spans 1–20 (MSLISKSLARIECSPFFYPR). The disordered stretch occupies residues 45 to 64 (GKTGNGERKQRAKAPAKTPE). The region spanning 97 to 195 (VANWVNLIGF…VLVQNLNFIQ (99 aa)) is the SSB domain. 2 PDF region regions span residues 237–289 (WNHL…PKLE) and 312–360 (WKDL…PKLP).

Expressed in the floral abscission zone.

The protein localises to the plastid. The protein resides in the chloroplast. In terms of biological role, binds preferentially single-stranded DNA. Does not bind to RNA. The sequence is that of Protein OSB2, chloroplastic (OSB2) from Arabidopsis thaliana (Mouse-ear cress).